A 717-amino-acid polypeptide reads, in one-letter code: ATP-dependent RNA helicase homolog DQX1 (717 aa).

The 169-residue stretch at 57–225 (QLESNPTGVV…WGNPPIVHIP (169 aa)) folds into the Helicase ATP-binding domain. 70–77 (GEPGSGKS) is a binding site for ATP. Residues 170–173 (DEAQ) carry the DEAQ box motif. Residues 248–447 (ACQAVLELCR…ALMQALEDLD (200 aa)) form the Helicase C-terminal domain. Residues 694 to 717 (GMADSTAGSKSSSAQEFRDPCVLQ) form a disordered region. Residues 699–708 (TAGSKSSSAQ) show a composition bias toward polar residues.

The protein resides in the nucleus. Might be involved in RNA metabolism; it is missing helicase motif III and may not have helicase activity. This chain is ATP-dependent RNA helicase homolog DQX1 (DQX1), found in Homo sapiens (Human).